A 1585-amino-acid polypeptide reads, in one-letter code: Adhesion G protein-coupled receptor B2 (1585 aa).

The signal sequence occupies residues 1–32; the sequence is MENTGWMGKGHRMTPACPLLLSVILSLRLATA. The Extracellular portion of the chain corresponds to 33-936; that stretch reads FDPAPSACSA…ELAGSPSVPL (904 aa). N-linked (GlcNAc...) asparagine glycosylation is found at N106, N191, and N192. Low complexity predominate over residues 229–238; it reads AGAGSTTTTS. The disordered stretch occupies residues 229-271; sequence AGAGSTTTTSPGPPAAHTLSNALVPGGPAPPAEADLHSGSSND. S266 carries an O-linked (Xyl...) (chondroitin sulfate) serine glycan. 4 TSP type-1 domains span residues 309-362, 364-417, 419-472, and 475-528; these read DPAA…ATCP, HGVW…AACP, EGQW…LECP, and DSKW…KRCP. Intrachain disulfides connect C321–C355, C325–C361, C336–C345, C376–C411, C380–C416, C391–C401, C431–C466, C435–C471, C446–C456, C487–C522, C491–C527, C502–C512, C534–C569, and C557–C587. N-linked (GlcNAc...) asparagine glycosylation occurs at N356. A glycan (N-linked (GlcNAc...) asparagine) is linked at N437. Residues N560 and N645 are each glycosylated (N-linked (GlcNAc...) asparagine). The 168-residue stretch at 757-924 folds into the GAIN-B domain; the sequence is DRLFLPKEVL…AVLAQPPKDL (168 aa). A disordered region spans residues 767 to 806; it reads SLSSPGKPATSGAAGSPGRGRGPGTVPPGPGHSHQRLLPA. Over residues 769-780 the composition is skewed to low complexity; the sequence is SSPGKPATSGAA. N867 carries an N-linked (GlcNAc...) asparagine glycan. 2 cysteine pairs are disulfide-bonded: C874-C906 and C894-C908. A GPS region spans residues 874–924; the sequence is CASWDYSRADASSGDWDTENCQTLETQAAHTRCQCQHLSTFAVLAQPPKDL. Residues 937–957 form a helical membrane-spanning segment; it reads VIGCAVSCMALLTLLAIYAAF. Residues 958–965 are Cytoplasmic-facing; it reads WRFIKSER. Residues 966-986 traverse the membrane as a helical segment; the sequence is SIILLNFCLSILASNILILVG. Residues 987–994 lie on the Extracellular side of the membrane; the sequence is QSRVLSKG. Residues 995 to 1015 traverse the membrane as a helical segment; the sequence is VCTMTAAFLHFFFLSSFCWVL. The Cytoplasmic portion of the chain corresponds to 1016–1036; the sequence is TEAWQSYLAVIGRMRTRLVRK. Residues 1037 to 1057 traverse the membrane as a helical segment; sequence RFLCLGWGLPALVVAVSVGFT. Topologically, residues 1058-1078 are extracellular; the sequence is RTKGYGTSSYCWLSLEGGLLY. The helical transmembrane segment at 1079 to 1099 threads the bilayer; sequence AFVGPAAVIVLVNMLIGIIVF. Over 1100 to 1121 the chain is Cytoplasmic; it reads NKLMARDGISDKSKKQRAGSER. The chain crosses the membrane as a helical span at residues 1122 to 1142; the sequence is CPWASLLLPCSACGAVPSPLL. At 1143-1153 the chain is on the extracellular side; sequence SSASARNAMAS. A helical membrane pass occupies residues 1154–1174; the sequence is LWSSCVVLPLLALTWMSAVLA. Residues 1175-1585 lie on the Cytoplasmic side of the membrane; sequence MTDRRSVLFQ…PPDGDFQTEV (411 aa). Y1351 carries the phosphotyrosine modification. Disordered regions lie at residues 1359 to 1385, 1423 to 1454, and 1498 to 1585; these read LSLQ…PRRA, FQPP…GSTM, and YRSQ…QTEV. Residues 1372–1382 show a composition bias toward basic and acidic residues; that stretch reads DAPRARPEGTP. The span at 1543 to 1552 shows a compositional bias: polar residues; it reads SWSTFKSMTL. Residues 1575–1585 show a composition bias toward acidic residues; that stretch reads EPPDGDFQTEV.

This sequence belongs to the G-protein coupled receptor 2 family. Adhesion G-protein coupled receptor (ADGR) subfamily. In terms of assembly, heterodimer of 2 chains generated by proteolytic processing; the large extracellular N-terminal fragment and the membrane-bound C-terminal fragment predominantly remain associated and non-covalently linked. Interacts with GABPB2. Interacts (via carboxy-terminus) with TAX1BP3. Interacts with GNAZ. Interacts with SH3GL2. Glycosylated. In terms of processing, autoproteolytically processed at the GPS region of the GAIN-B domain; this cleavage modulates receptor activity. Additionally, furin is involved in the cleavage at another site, in the middle of the extracellular domain, generating a soluble fragment. As to expression, detected in cerebrospinal fluid (at protein level). Strongly expressed in brain. Also detected in heart, thymus, skeletal muscle, and different cell lines.

Its subcellular location is the cell membrane. It is found in the secreted. Its activity is regulated as follows. Receptor activity is regulated by proteolytic processing. The long N-terminal has a an inhibitory effect on the constitutive signaling activity. Removal of the N-terminal region induces an increase of the receptor activity. In terms of biological role, orphan G-protein coupled receptor involved in cell adhesion and probably in cell-cell interactions. Activates NFAT-signaling pathway, a transcription factor, via the G-protein GNAZ. Involved in angiogenesis inhibition. In Homo sapiens (Human), this protein is Adhesion G protein-coupled receptor B2.